Consider the following 448-residue polypeptide: Metacaspase-1 (448 aa).

Positions 1 to 129 (MFPGQGRHTY…GHYSRPPTDS (129 aa)) are disordered. The segment covering 10–44 (YGGQQSNYSNQQQGYDQGYNQGYGQAYGQEYNQGY) has biased composition (low complexity). Residues 61–70 (SGPPPGPPPG) are compositionally biased toward pro residues. Residues 99-114 (YGNNQTRGSGNEQNYG) are compositionally biased toward polar residues. Residues His231 and Cys292 contribute to the active site.

The protein belongs to the peptidase C14B family.

Its function is as follows. Involved in cell death (apoptosis). The sequence is that of Metacaspase-1 (MCA1) from Candida albicans (strain SC5314 / ATCC MYA-2876) (Yeast).